Reading from the N-terminus, the 66-residue chain is Large ribosomal subunit protein eL24 (66 aa).

The Zn(2+) site is built by Cys-6, Cys-9, Cys-32, and Cys-36. The C4-type zinc finger occupies 6–36; the sequence is CSFCGKTIEPGTGIMYVRKDGAILYFCSNKC.

It belongs to the eukaryotic ribosomal protein eL24 family. In terms of assembly, part of the 50S ribosomal subunit. Forms a cluster with proteins L3 and L14. Zn(2+) serves as cofactor.

Its function is as follows. Binds to the 23S rRNA. The chain is Large ribosomal subunit protein eL24 from Thermoplasma volcanium (strain ATCC 51530 / DSM 4299 / JCM 9571 / NBRC 15438 / GSS1).